The sequence spans 26 residues: L-amino-acid oxidase (26 aa).

It belongs to the flavin monoamine oxidase family. Monomer. Requires FAD as cofactor. In terms of processing, not glycosylated. In terms of tissue distribution, expressed by the ink gland.

Its subcellular location is the secreted. The enzyme catalyses an L-alpha-amino acid + O2 + H2O = a 2-oxocarboxylate + H2O2 + NH4(+). Its function is as follows. Catalyzes the oxidative deamination of positively charged L-amino acids L-Lys and L-Arg but not of amino acids L-His, L-Asp or L-Glu. Has antibacterial activity against the Gram-positive bacterium S.aureus (MIC=15 ug/ml). This antibacterial activity is bacteriostatic in the absence of amino acids L-Lys or L-Arg but bactericidal in their presence. The antibacterial effect is largely dependent on H(2)O(2) produced in the oxidative deamination of substrates. Has hemagglutinating activity towards rabbit erythrocytes. Hemagglutinating activity is inhibited by the glycoprotein fetuin, but not by glucose, mannose, galactose, N-acetylglucosamine, N-acetylgalactosamine or sialic acid. In Aplysia dactylomela (Spotted sea hare), this protein is L-amino-acid oxidase.